Here is a 351-residue protein sequence, read N- to C-terminus: S-adenosylmethionine:tRNA ribosyltransferase-isomerase (351 aa).

The protein belongs to the QueA family. In terms of assembly, monomer.

It is found in the cytoplasm. The catalysed reaction is 7-aminomethyl-7-carbaguanosine(34) in tRNA + S-adenosyl-L-methionine = epoxyqueuosine(34) in tRNA + adenine + L-methionine + 2 H(+). It functions in the pathway tRNA modification; tRNA-queuosine biosynthesis. In terms of biological role, transfers and isomerizes the ribose moiety from AdoMet to the 7-aminomethyl group of 7-deazaguanine (preQ1-tRNA) to give epoxyqueuosine (oQ-tRNA). This chain is S-adenosylmethionine:tRNA ribosyltransferase-isomerase, found in Idiomarina loihiensis (strain ATCC BAA-735 / DSM 15497 / L2-TR).